The sequence spans 497 residues: Long chain base biosynthesis protein 2c (497 aa).

The helical transmembrane segment at 4 to 24 (VPFVTAVTTVFSYGVIFGFGH) threads the bilayer. The residue at position 319 (K319) is an N6-(pyridoxal phosphate)lysine.

The protein belongs to the class-II pyridoxal-phosphate-dependent aminotransferase family. In terms of assembly, heterodimer with LCB1. Component of the serine palmitoyltransferase (SPT) complex, composed of LCB1 and LCB2. Pyridoxal 5'-phosphate is required as a cofactor.

It localises to the endoplasmic reticulum membrane. The catalysed reaction is L-serine + hexadecanoyl-CoA + H(+) = 3-oxosphinganine + CO2 + CoA. The protein operates within lipid metabolism; sphingolipid metabolism. Serine palmitoyltransferase (SPT). The heterodimer formed with LCB1 constitutes the catalytic core. This is Long chain base biosynthesis protein 2c from Oryza sativa subsp. japonica (Rice).